The primary structure comprises 570 residues: uncharacterized protein (570 aa).

A compositionally biased stretch (low complexity) spans 1-15 (MTESIISSRTASISS). The interval 1 to 34 (MTESIISSRTASISSKEGYEIRQGSTDSSSLDLE) is disordered. S14 is modified (phosphoserine). The next 12 helical transmembrane spans lie at 96-116 (WKLY…LFIG), 141-161 (NLNT…HYIM), 163-183 (TFPL…IVFL), 198-218 (FFLG…MGMF), 229-249 (PVFW…AYGL), 261-281 (LFMI…FFYY), 328-348 (PITW…NLAY), 369-389 (VALA…MYLI), 397-417 (AMFW…LPWS), 423-443 (LATM…LGWT), 457-477 (GLMF…LWQS), and 485-505 (PAWI…YLVA).

Belongs to the major facilitator superfamily. Allantoate permease family.

The protein resides in the endoplasmic reticulum. It localises to the membrane. This is an uncharacterized protein from Schizosaccharomyces pombe (strain 972 / ATCC 24843) (Fission yeast).